The chain runs to 569 residues: Putative potassium-transporting ATPase ATP-binding subunit (569 aa).

The next 2 helical transmembrane spans lie at 34–54 (PVMF…LAMV) and 58–78 (IAGS…TVLF). Residue D194 is the 4-aspartylphosphate intermediate of the active site. ATP contacts are provided by residues D231, E235, 264–271 (FTAQSRMS), and K282. Mg(2+) contacts are provided by D405 and D409. Transmembrane regions (helical) follow at residues 475–495 (FAII…LNVM), 503–523 (AILS…PLAL), and 543–563 (IYGL…DVLL).

Belongs to the cation transport ATPase (P-type) (TC 3.A.3) family. Type IA subfamily. In terms of assembly, the system is composed of three essential subunits: KdpA, KdpB and KdpC.

It localises to the cell inner membrane. The enzyme catalyses K(+)(out) + ATP + H2O = K(+)(in) + ADP + phosphate + H(+). Functionally, part of the high-affinity ATP-driven potassium transport (or Kdp) system, which catalyzes the hydrolysis of ATP coupled with the electrogenic transport of potassium into the cytoplasm. This subunit is responsible for energy coupling to the transport system and for the release of the potassium ions to the cytoplasm. This is Putative potassium-transporting ATPase ATP-binding subunit from Salmonella typhi.